We begin with the raw amino-acid sequence, 475 residues long: Ribulose bisphosphate carboxylase large chain (475 aa).

A propeptide spanning residues M1–S2 is cleaved from the precursor. N-acetylproline is present on P3. An N6,N6,N6-trimethyllysine modification is found at K14. The substrate site is built by N123 and T173. K175 (proton acceptor) is an active-site residue. K177 provides a ligand contact to substrate. K201, D203, and E204 together coordinate Mg(2+). The residue at position 201 (K201) is an N6-carboxylysine. The active-site Proton acceptor is H294. Residues R295, H327, and S379 each coordinate substrate.

It belongs to the RuBisCO large chain family. Type I subfamily. As to quaternary structure, heterohexadecamer of 8 large chains and 8 small chains; disulfide-linked. The disulfide link is formed within the large subunit homodimers. It depends on Mg(2+) as a cofactor. In terms of processing, the disulfide bond which can form in the large chain dimeric partners within the hexadecamer appears to be associated with oxidative stress and protein turnover.

Its subcellular location is the plastid. It localises to the chloroplast. The enzyme catalyses 2 (2R)-3-phosphoglycerate + 2 H(+) = D-ribulose 1,5-bisphosphate + CO2 + H2O. The catalysed reaction is D-ribulose 1,5-bisphosphate + O2 = 2-phosphoglycolate + (2R)-3-phosphoglycerate + 2 H(+). RuBisCO catalyzes two reactions: the carboxylation of D-ribulose 1,5-bisphosphate, the primary event in carbon dioxide fixation, as well as the oxidative fragmentation of the pentose substrate in the photorespiration process. Both reactions occur simultaneously and in competition at the same active site. This Cedrus deodara (Deodar cedar) protein is Ribulose bisphosphate carboxylase large chain.